The chain runs to 653 residues: uncharacterized protein (653 aa).

2 helical membrane-spanning segments follow: residues 39–59 and 207–227; these read AMTT…LKLI and AVFV…AFTI. An HAMP domain is found at 225 to 277; the sequence is FTITKPIRELLTGVKNIASGDFHQRISLPFGGELGALIFNFNEMAERLEKYEQ. One can recognise a PAS domain in the interval 286–356; sequence EKAKLETLVS…PALNDIVRKN (71 aa). In terms of domain architecture, Histidine kinase spans 421 to 651; it reads NVSHELRTPL…CFFFDLIIAK (231 aa). The residue at position 424 (His-424) is a Phosphohistidine; by autocatalysis.

Its subcellular location is the plastid. The protein resides in the chloroplast membrane. It catalyses the reaction ATP + protein L-histidine = ADP + protein N-phospho-L-histidine.. This is an uncharacterized protein from Pyropia yezoensis (Susabi-nori).